Consider the following 202-residue polypeptide: Urease accessory protein UreE (202 aa).

Residues 138 to 202 (RGAYHSHGGH…HGHHHGHKHD (65 aa)) form a disordered region. The segment covering 147–193 (HSHDHGHAAHDHGHAAHDHGHNHDHDHGHAHGHDHQHDHNCDHDHDH) has biased composition (basic and acidic residues).

The protein belongs to the UreE family.

The protein localises to the cytoplasm. Its function is as follows. Involved in urease metallocenter assembly. Binds nickel. Probably functions as a nickel donor during metallocenter assembly. The sequence is that of Urease accessory protein UreE from Rhizobium etli (strain CIAT 652).